A 333-amino-acid polypeptide reads, in one-letter code: Trimethylamine N-oxide-binding protein (333 aa).

The signal sequence occupies residues 1–42 (MRLFREIAANDPGPTGRMKNMKTFTTALATGVLALCPLAALA). Trimethylamine N-oxide is bound by residues Trp-55, Trp-102, Glu-131, Trp-177, and Trp-222. 5 residues coordinate Ca(2+): Pro-249, Val-251, Asn-254, Ala-257, and Asp-260.

In terms of assembly, the complex is probably composed of two ATP-binding proteins (TmoW), two transmembrane proteins (TmoV) and a solute-binding protein (TmoX). Monomer in solution, but forms homodimers in crystals.

The protein localises to the periplasm. With respect to regulation, binds a Ca(2+) ion, which has little effect on either the binding affinity or the secondary structure, but plays an important role in maintaining the stability of TmoX. It may modulate the protein stability in response to biological needs and environmental changes. Thermostability is dramatically decreased when Ca(2+) is removed by EDTA. Its function is as follows. Part of the ABC transporter complex TmoXWV involved in trimethylamine N-oxide (TMAO) import. Is specific for TMAO and essential for TMAO metabolism. Binds TMAO with high affinity. In vitro, also presents a high binding affinity for choline, however this transporter seems specific for TMAO and the choline-binding affinity presented by recombinant TmoX may not make physiological sense. This chain is Trimethylamine N-oxide-binding protein, found in Ruegeria pomeroyi (strain ATCC 700808 / DSM 15171 / DSS-3) (Silicibacter pomeroyi).